Consider the following 574-residue polypeptide: Glutamate--tRNA ligase (574 aa).

The 'HIGH' region motif lies at 109–119 (PNPDFVIHMGN).

Belongs to the class-I aminoacyl-tRNA synthetase family. Glutamate--tRNA ligase type 2 subfamily.

It localises to the cytoplasm. The catalysed reaction is tRNA(Glu) + L-glutamate + ATP = L-glutamyl-tRNA(Glu) + AMP + diphosphate. Catalyzes the attachment of glutamate to tRNA(Glu) in a two-step reaction: glutamate is first activated by ATP to form Glu-AMP and then transferred to the acceptor end of tRNA(Glu). The chain is Glutamate--tRNA ligase from Aeropyrum pernix (strain ATCC 700893 / DSM 11879 / JCM 9820 / NBRC 100138 / K1).